The following is a 231-amino-acid chain: MMKKQIINKKDLLGLGPNSKLIKDYKKQWTTLSKIQEETLIGNILGDVYIKKLKRNKHFLLQFEWKNKAYIEHIVRVFDEYVISPPTLYERKNHLGNKVITWRAQTFEHKAFDKLGYYFMENHKKIIKPDLVLNYITERSLAYWFMDDGGKWDYNKKTKNKSLVLHTQGFKKEEVEILINDLNIKFNLNCSIKFNKNKPIIYIPNKDYELFYNLVNPYIIPEMKYKLLFNV.

It belongs to the LAGLIDADG endonuclease family.

The protein localises to the mitochondrion. Its function is as follows. Endonuclease involved in mitochondrial 21S rRNA gene intron homing. In Wickerhamomyces canadensis (Yeast), this protein is Probable intron-encoded endonuclease 1.